Consider the following 557-residue polypeptide: Urocanate hydratase (557 aa).

NAD(+) is bound by residues 53–54 (GG), Q131, 177–179 (GMG), E197, R202, 243–244 (NA), 264–268 (QTSAH), 274–275 (YL), and Y323. C411 is an active-site residue. G493 lines the NAD(+) pocket.

This sequence belongs to the urocanase family. NAD(+) is required as a cofactor.

It localises to the cytoplasm. It carries out the reaction 4-imidazolone-5-propanoate = trans-urocanate + H2O. It participates in amino-acid degradation; L-histidine degradation into L-glutamate; N-formimidoyl-L-glutamate from L-histidine: step 2/3. Catalyzes the conversion of urocanate to 4-imidazolone-5-propionate. This Pseudomonas putida (strain GB-1) protein is Urocanate hydratase.